The following is a 396-amino-acid chain: NADH-quinone oxidoreductase subunit D 1 (396 aa).

Belongs to the complex I 49 kDa subunit family. In terms of assembly, NDH-1 is composed of 14 different subunits. Subunits NuoB, C, D, E, F, and G constitute the peripheral sector of the complex.

The protein localises to the cell inner membrane. The catalysed reaction is a quinone + NADH + 5 H(+)(in) = a quinol + NAD(+) + 4 H(+)(out). In terms of biological role, NDH-1 shuttles electrons from NADH, via FMN and iron-sulfur (Fe-S) centers, to quinones in the respiratory chain. The immediate electron acceptor for the enzyme in this species is believed to be ubiquinone. Couples the redox reaction to proton translocation (for every two electrons transferred, four hydrogen ions are translocated across the cytoplasmic membrane), and thus conserves the redox energy in a proton gradient. This Rhizobium meliloti (strain 1021) (Ensifer meliloti) protein is NADH-quinone oxidoreductase subunit D 1.